A 1154-amino-acid chain; its full sequence is DNA-directed RNA polymerase subunit beta' (1154 aa).

Zn(2+)-binding residues include Cys60, Cys62, Cys75, and Cys78. Positions 449, 451, and 453 each coordinate Mg(2+). Cys774, Cys848, Cys855, and Cys858 together coordinate Zn(2+).

Belongs to the RNA polymerase beta' chain family. As to quaternary structure, the RNAP catalytic core consists of 2 alpha, 1 beta, 1 beta' and 1 omega subunit. When a sigma factor is associated with the core the holoenzyme is formed, which can initiate transcription. Mg(2+) is required as a cofactor. Requires Zn(2+) as cofactor.

The enzyme catalyses RNA(n) + a ribonucleoside 5'-triphosphate = RNA(n+1) + diphosphate. Functionally, DNA-dependent RNA polymerase catalyzes the transcription of DNA into RNA using the four ribonucleoside triphosphates as substrates. The chain is DNA-directed RNA polymerase subunit beta' from Desulforudis audaxviator (strain MP104C).